The sequence spans 914 residues: Thyroid peroxidase (914 aa).

The signal sequence occupies residues 1 to 31 (MRTLGAMAIMLVVMGTVIFLSFILRSRDILC). The Extracellular portion of the chain corresponds to 32 to 834 (GKTMKSHVIS…TCIDSGRLPR (803 aa)). N123 is a glycosylation site (N-linked (GlcNAc...) asparagine). An intrachain disulfide couples C136 to C152. Residue D232 coordinates heme b. Catalysis depends on H233, which acts as the Proton acceptor. Residue D234 participates in Ca(2+) binding. 2 cysteine pairs are disulfide-bonded: C253/C263 and C257/C278. N-linked (GlcNAc...) asparagine glycosylation is found at N271 and N299. Residues T313, F315, D317, and S319 each contribute to the Ca(2+) site. N334 is a glycosylation site (N-linked (GlcNAc...) asparagine). 2 residues coordinate heme b: E387 and H482. Cystine bridges form between C586-C643, C684-C709, C730-C770, C756-C782, C788-C802, C796-C811, and C813-C826. Residue N603 is glycosylated (N-linked (GlcNAc...) asparagine). Residues 728 to 783 (DKCVFPEEVDNGNFVHCEESGKLVLVYSCFHGYKLQGQEQVTCTQKGWDSEPPVCK) form the Sushi domain. An EGF-like; calcium-binding domain is found at 784–827 (DVNECADLTHPPCHPSAQCKNTKGSFQCVCTDPYVLGEDEKTCI). Residues 835–859 (ASWVSIALGALLIGGLASLTWIVIC) traverse the membrane as a helical segment. The Cytoplasmic segment spans residues 860–914 (RWTHADKKATLPITERVTTQSGCRKSQGRGISPHKAAAQDTGQEPASGSRVLLCE). The disordered stretch occupies residues 881 to 909 (GCRKSQGRGISPHKAAAQDTGQEPASGSR).

The protein belongs to the peroxidase family. XPO subfamily. Interacts with DUOX1, DUOX2 and CYBA. The cofactor is Ca(2+). Heme b serves as cofactor. Post-translationally, heme is covalently bound through a H(2)O(2)-dependent autocatalytic process. Heme insertion is important for the delivery of protein at the cell surface. In terms of processing, cleaved in its N-terminal part.

It is found in the membrane. The enzyme catalyses 2 iodide + H2O2 + 2 H(+) = diiodine + 2 H2O. It catalyses the reaction [thyroglobulin]-L-tyrosine + iodide + H2O2 + H(+) = [thyroglobulin]-3-iodo-L-tyrosine + 2 H2O. The catalysed reaction is [thyroglobulin]-3-iodo-L-tyrosine + iodide + H2O2 + H(+) = [thyroglobulin]-3,5-diiodo-L-tyrosine + 2 H2O. It carries out the reaction 2 [thyroglobulin]-3,5-diiodo-L-tyrosine + H2O2 = [thyroglobulin]-L-thyroxine + [thyroglobulin]-dehydroalanine + 2 H2O. The enzyme catalyses [thyroglobulin]-3-iodo-L-tyrosine + [thyroglobulin]-3,5-diiodo-L-tyrosine + H2O2 = [thyroglobulin]-3,3',5-triiodo-L-thyronine + [thyroglobulin]-dehydroalanine + 2 H2O. The protein operates within hormone biosynthesis; thyroid hormone biosynthesis. In terms of biological role, iodination and coupling of the hormonogenic tyrosines in thyroglobulin to yield the thyroid hormones T(3) and T(4). In Mus musculus (Mouse), this protein is Thyroid peroxidase (Tpo).